We begin with the raw amino-acid sequence, 376 residues long: N,N'-diacetylbacillosaminyl-diphospho-undecaprenol alpha-1,3-N-acetylgalactosaminyltransferase (376 aa).

Belongs to the glycosyltransferase group 1 family.

The enzyme catalyses N,N'-diacetyl-alpha-D-bacillosaminyl-tri-trans,hepta-cis-undecaprenyl diphosphate + UDP-N-acetyl-alpha-D-galactosamine = N-acetyl-alpha-D-galactosaminyl-(1-&gt;3)-N,N'-diacetyl-alpha-D-bacillosaminyl-tri-trans,hepta-cis-undecaprenyl diphosphate + UDP + H(+). It functions in the pathway protein modification; protein glycosylation. Adds the first GalNAc residue on to the isoprenoid-linked bacillosamine (2,4-diacetamido-2,4,6-trideoxyglucose) carrier in the N-linked protein glycosylation pathway. Acts first on the undecaprenylpyrophosphate-linked bacillosamine (Und-PP-Bac) substrate to yield the disaccharide. This Campylobacter jejuni subsp. jejuni serotype O:2 (strain ATCC 700819 / NCTC 11168) protein is N,N'-diacetylbacillosaminyl-diphospho-undecaprenol alpha-1,3-N-acetylgalactosaminyltransferase (pglA).